The chain runs to 104 residues: Phosphoribosyl-ATP pyrophosphatase (104 aa).

The protein belongs to the PRA-PH family.

The protein localises to the cytoplasm. The enzyme catalyses 1-(5-phospho-beta-D-ribosyl)-ATP + H2O = 1-(5-phospho-beta-D-ribosyl)-5'-AMP + diphosphate + H(+). It functions in the pathway amino-acid biosynthesis; L-histidine biosynthesis; L-histidine from 5-phospho-alpha-D-ribose 1-diphosphate: step 2/9. In Streptococcus sanguinis (strain SK36), this protein is Phosphoribosyl-ATP pyrophosphatase.